The chain runs to 134 residues: ATP synthase epsilon chain (134 aa).

This sequence belongs to the ATPase epsilon chain family. F-type ATPases have 2 components, CF(1) - the catalytic core - and CF(0) - the membrane proton channel. CF(1) has five subunits: alpha(3), beta(3), gamma(1), delta(1), epsilon(1). CF(0) has three main subunits: a, b and c.

It is found in the cell membrane. Functionally, produces ATP from ADP in the presence of a proton gradient across the membrane. In Ruminococcus albus (strain ATCC 27210 / DSM 20455 / JCM 14654 / NCDO 2250 / 7), this protein is ATP synthase epsilon chain.